A 289-amino-acid polypeptide reads, in one-letter code: Protease HtpX homolog (289 aa).

The next 2 membrane-spanning stretches (helical) occupy residues 10-30 (TAALFGVLWAVLLGLGAVIGS) and 34-54 (STTPIWIMALVGVGTTAYGYW). Position 138 (His-138) interacts with Zn(2+). Glu-139 is an active-site residue. His-142 provides a ligand contact to Zn(2+). Transmembrane regions (helical) follow at residues 153 to 173 (VAAAVAGVITSVGQMLLIFGG) and 182 to 202 (LAVMAMALLAPLAAVVIQSAI). Glu-207 contacts Zn(2+).

The protein belongs to the peptidase M48B family. Requires Zn(2+) as cofactor.

The protein resides in the cell membrane. This Arthrobacter sp. (strain FB24) protein is Protease HtpX homolog.